The sequence spans 292 residues: Porphobilinogen deaminase (292 aa).

Cysteine 235 is modified (S-(dipyrrolylmethanemethyl)cysteine).

This sequence belongs to the HMBS family. Monomer. Dipyrromethane serves as cofactor.

The catalysed reaction is 4 porphobilinogen + H2O = hydroxymethylbilane + 4 NH4(+). It participates in porphyrin-containing compound metabolism; protoporphyrin-IX biosynthesis; coproporphyrinogen-III from 5-aminolevulinate: step 2/4. In terms of biological role, tetrapolymerization of the monopyrrole PBG into the hydroxymethylbilane pre-uroporphyrinogen in several discrete steps. This Acetivibrio thermocellus (strain ATCC 27405 / DSM 1237 / JCM 9322 / NBRC 103400 / NCIMB 10682 / NRRL B-4536 / VPI 7372) (Clostridium thermocellum) protein is Porphobilinogen deaminase.